The chain runs to 298 residues: MTKQTEYKRKPEWLKIKLNTNENYTGLKKMMRSKQLHTVCEEAKCPNIHECWAVRKTATFMILGAICTRACRFCAVKTGLPTELDLQEPERVADSVVQMGLKHVVITAVARDDLKDGGAAVFAETVRAVRRKNPFTSIEVLPSDMGGVEENLRILMDAKPDILNHNIETVRRLSDRVRARAKYDRSLEFLRRAKEMQPDIPTKSSIMVGLGETREDLLEAMDDLRANNVDILTLGQYLQPSKKHLPVIRYYTPAEFAELKEIALSKGFSHCEAGPLVRSSYHADEQVRSAKENTVEAK.

The [4Fe-4S] cluster site is built by cysteine 40, cysteine 45, cysteine 51, cysteine 67, cysteine 71, cysteine 74, and serine 280. One can recognise a Radical SAM core domain in the interval 53-269 (AVRKTATFMI…KEIALSKGFS (217 aa)).

The protein belongs to the radical SAM superfamily. Lipoyl synthase family. It depends on [4Fe-4S] cluster as a cofactor.

Its subcellular location is the cytoplasm. The enzyme catalyses [[Fe-S] cluster scaffold protein carrying a second [4Fe-4S](2+) cluster] + N(6)-octanoyl-L-lysyl-[protein] + 2 oxidized [2Fe-2S]-[ferredoxin] + 2 S-adenosyl-L-methionine + 4 H(+) = [[Fe-S] cluster scaffold protein] + N(6)-[(R)-dihydrolipoyl]-L-lysyl-[protein] + 4 Fe(3+) + 2 hydrogen sulfide + 2 5'-deoxyadenosine + 2 L-methionine + 2 reduced [2Fe-2S]-[ferredoxin]. Its pathway is protein modification; protein lipoylation via endogenous pathway; protein N(6)-(lipoyl)lysine from octanoyl-[acyl-carrier-protein]. In terms of biological role, catalyzes the radical-mediated insertion of two sulfur atoms into the C-6 and C-8 positions of the octanoyl moiety bound to the lipoyl domains of lipoate-dependent enzymes, thereby converting the octanoylated domains into lipoylated derivatives. The sequence is that of Lipoyl synthase from Bacillus cytotoxicus (strain DSM 22905 / CIP 110041 / 391-98 / NVH 391-98).